Reading from the N-terminus, the 533-residue chain is Fimbrial subunit type 1 (533 aa).

The signal sequence occupies residues 1-30 (MHSLNTRRGLGLAAAMTLAAGALVAPTGAA). Residues 496 to 500 (LPLTG) carry the LPXTG sorting signal motif. Residue Thr-499 is modified to Pentaglycyl murein peptidoglycan amidated threonine. The propeptide at 500–533 (GANGVIFLTIAGALLVAGGAVVAYANKRRHVAKH) is removed by sortase.

The protein localises to the secreted. The protein resides in the cell wall. It localises to the fimbrium. Major fimbrial subunit of A.viscosus. In Actinomyces viscosus, this protein is Fimbrial subunit type 1.